The primary structure comprises 324 residues: tRNA(Ile)-lysidine synthase (324 aa).

33–38 provides a ligand contact to ATP; that stretch reads SGGPDS.

The protein belongs to the tRNA(Ile)-lysidine synthase family.

It localises to the cytoplasm. The enzyme catalyses cytidine(34) in tRNA(Ile2) + L-lysine + ATP = lysidine(34) in tRNA(Ile2) + AMP + diphosphate + H(+). In terms of biological role, ligates lysine onto the cytidine present at position 34 of the AUA codon-specific tRNA(Ile) that contains the anticodon CAU, in an ATP-dependent manner. Cytidine is converted to lysidine, thus changing the amino acid specificity of the tRNA from methionine to isoleucine. The sequence is that of tRNA(Ile)-lysidine synthase from Thermobifida fusca (strain YX).